A 426-amino-acid polypeptide reads, in one-letter code: D-tagatose-1,6-bisphosphate aldolase subunit KbaZ (426 aa).

The protein belongs to the GatZ/KbaZ family. KbaZ subfamily. Forms a complex with KbaY.

It functions in the pathway carbohydrate metabolism; D-tagatose 6-phosphate degradation; D-glyceraldehyde 3-phosphate and glycerone phosphate from D-tagatose 6-phosphate: step 2/2. Component of the tagatose-1,6-bisphosphate aldolase KbaYZ that is required for full activity and stability of the Y subunit. Could have a chaperone-like function for the proper and stable folding of KbaY. When expressed alone, KbaZ does not show any aldolase activity. The protein is D-tagatose-1,6-bisphosphate aldolase subunit KbaZ of Escherichia fergusonii (strain ATCC 35469 / DSM 13698 / CCUG 18766 / IAM 14443 / JCM 21226 / LMG 7866 / NBRC 102419 / NCTC 12128 / CDC 0568-73).